A 151-amino-acid polypeptide reads, in one-letter code: Nascent polypeptide-associated complex subunit beta (151 aa).

Residues 32–97 (EQDDTKLMEA…PQEKDVTQLI (66 aa)) enclose the NAC-A/B domain. Residues 122 to 151 (GKTPSMGGENAGADEDIPDLIEGQKFDEVE) form a disordered region.

It belongs to the NAC-beta family. In terms of assembly, part of the nascent polypeptide-associated complex (NAC), consisting of EGD2 and EGD1. NAC associates with ribosomes via EGD1.

Its subcellular location is the cytoplasm. It is found in the nucleus. In terms of biological role, component of the nascent polypeptide-associated complex (NAC), a dynamic component of the ribosomal exit tunnel, protecting the emerging polypeptides from interaction with other cytoplasmic proteins to ensure appropriate nascent protein targeting. The NAC complex also promotes mitochondrial protein import by enhancing productive ribosome interactions with the outer mitochondrial membrane and blocks the inappropriate interaction of ribosomes translating non-secretory nascent polypeptides with translocation sites in the membrane of the endoplasmic reticulum. EGD1 may act as a transcription factor that exert a negative effect on the expression of several genes that are transcribed by RNA polymerase II. The chain is Nascent polypeptide-associated complex subunit beta (EGD1) from Meyerozyma guilliermondii (strain ATCC 6260 / CBS 566 / DSM 6381 / JCM 1539 / NBRC 10279 / NRRL Y-324) (Yeast).